The following is a 219-amino-acid chain: Probable GTP-binding protein EngB (219 aa).

The 184-residue stretch at 24–207 (VQPEIAFAGR…HELIESWLRP (184 aa)) folds into the EngB-type G domain. GTP-binding positions include 32–39 (GRSNAGKS), 59–63 (GRTQH), 81–84 (DLPG), 148–151 (TKCD), and 186–188 (FSA). Positions 39 and 61 each coordinate Mg(2+).

Belongs to the TRAFAC class TrmE-Era-EngA-EngB-Septin-like GTPase superfamily. EngB GTPase family. Requires Mg(2+) as cofactor.

Its function is as follows. Necessary for normal cell division and for the maintenance of normal septation. This Burkholderia ambifaria (strain ATCC BAA-244 / DSM 16087 / CCUG 44356 / LMG 19182 / AMMD) (Burkholderia cepacia (strain AMMD)) protein is Probable GTP-binding protein EngB.